An 81-amino-acid polypeptide reads, in one-letter code: Protein RADIALIS-like 3 (81 aa).

Residues 7–62 (SSSASWTRKENKLFERALATYDQDTPDRWHNVARAVGGKSAEEVRRHYELLIRDVN) form the SANT domain.

As to expression, expressed just outside the vascular bundles in the rosette stem and the leaf traces. Not detected in floral primordia.

The protein localises to the nucleus. Functionally, probable transcription factor. The polypeptide is Protein RADIALIS-like 3 (RL3) (Arabidopsis thaliana (Mouse-ear cress)).